A 345-amino-acid polypeptide reads, in one-letter code: Protein TRIGALACTOSYLDIACYLGLYCEROL 3, chloroplastic (345 aa).

The transit peptide at 1 to 46 directs the protein to the chloroplast; it reads MLSLSCSSSSSSLLPPSLHYHGSSSVQSIVVPRRSLISFRRKVSCC. Residues 85 to 336 form the ABC transporter domain; that stretch reads IECRDVYKSF…TNPIVQQFAT (252 aa). 117–124 provides a ligand contact to ATP; that stretch reads GPSGTGKS.

It belongs to the ABC transporter superfamily. ABCI family. As to quaternary structure, catalytic subunit of the TGD complex, a lipid translocator at the inner chloroplast envelope membrane made of TGD1, TGD2 and TGD3. Interacts with TGD1 and TGD2 with an overall subunit stoichiometry of 2 TGD1, 2 TGD3 and 8 to 12 TGD2. Interacts with TGD5.

The protein localises to the plastid. It localises to the chloroplast stroma. ATPase transporter involved in lipid transfer from the endoplasmic reticulum (ER) to plastids, and necessary for thylakoids formation. Not involved in transition metal transport pathways. The sequence is that of Protein TRIGALACTOSYLDIACYLGLYCEROL 3, chloroplastic from Arabidopsis thaliana (Mouse-ear cress).